A 511-amino-acid polypeptide reads, in one-letter code: Mesoderm induction early response protein 1 (511 aa).

Residues 1–16 are compositionally biased toward low complexity; that stretch reads MAEPSVESSSPGGSAT. A disordered region spans residues 1-171; the sequence is MAEPSVESSS…EEESEEDEDY (171 aa). The residue at position 10 (S10) is a Phosphoserine. Residues 17-36 show a composition bias toward basic and acidic residues; that stretch reads SEDHEFDPSADMLVHDFDDE. Positions 37–46 are enriched in acidic residues; the sequence is RTLEEEEMME. Residues 57–66 show a composition bias toward basic and acidic residues; sequence DLAREGDMPI. Positions 83 to 104 are enriched in acidic residues; sequence EEEEEEEEEEEGEDDEDADNDD. The segment covering 128–143 has biased composition (polar residues); sequence QSSNDDPSQSVTSQDA. S140 is subject to Phosphoserine. A Phosphotyrosine modification is found at Y154. A phosphoserine mark is found at S159 and S165. The segment covering 159-171 has biased composition (acidic residues); that stretch reads SEIEEESEEDEDY. Residues 179-277 enclose the ELM2 domain; that stretch reads KEIMVGSMFQ…EALRRLRFNV (99 aa). K238 is covalently cross-linked (Glycyl lysine isopeptide (Lys-Gly) (interchain with G-Cter in SUMO2)). Residues 282–334 form the SANT domain; sequence EELSVWTEEECRNFEQGLKAYGKDFHLIQANKVRTRSVGECVAFYYMWKKSER. The tract at residues 365-511 is disordered; that stretch reads ESESAASSRA…KFEEHENTND (147 aa). Residues S366, S368, and S376 each carry the phosphoserine modification. Over residues 397–408 the composition is skewed to polar residues; that stretch reads SSRNQNGVSSNG. Basic and acidic residues-rich tracts occupy residues 413 to 422 and 461 to 474; these read LNKEEVKVEG and ARNE…NERP. K419 participates in a covalent cross-link: Glycyl lysine isopeptide (Lys-Gly) (interchain with G-Cter in SUMO2). Residues 481–493 are compositionally biased toward polar residues; that stretch reads NSSGKESPGSSEF. Phosphoserine occurs at positions 482, 487, and 490. Basic and acidic residues predominate over residues 499–511; that stretch reads SHGKFEEHENTND.

Interacts with HDAC1. Part of a complex containing at least CDYL, MIER1, MIER2, HDAC1 and HDAC2. Ubiquitously expressed. Isoform 1 is only expressed in testis.

It localises to the nucleus. Functionally, transcriptional repressor regulating the expression of a number of genes including SP1 target genes. Probably functions through recruitment of HDAC1 a histone deacetylase involved in chromatin silencing. In Mus musculus (Mouse), this protein is Mesoderm induction early response protein 1 (Mier1).